The sequence spans 149 residues: Transcriptional repressor NrdR (149 aa).

The segment at 3–34 is a zinc-finger region; the sequence is CPFCSATDTKVIDSRLVAEGHQVRRRRECTEC. The ATP-cone domain maps to 49 to 139; that stretch reads PRVIKRDGSR…VYRAFEDVSE (91 aa).

This sequence belongs to the NrdR family. The cofactor is Zn(2+).

In terms of biological role, negatively regulates transcription of bacterial ribonucleotide reductase nrd genes and operons by binding to NrdR-boxes. The sequence is that of Transcriptional repressor NrdR from Shewanella baltica (strain OS223).